We begin with the raw amino-acid sequence, 261 residues long: Cytochrome c oxidase subunit 3 (261 aa).

The Mitochondrial matrix portion of the chain corresponds to 1–15; sequence MTHQTHAYHMVNPSP. A helical membrane pass occupies residues 16–34; that stretch reads WPLTGALSALLMTSGLIMW. Residues 35-40 lie on the Mitochondrial intermembrane side of the membrane; sequence FHFNST. Residues 41–66 form a helical membrane-spanning segment; it reads ILLMLGLTTNMLTMYQWWRDIIREST. Residues 67-72 are Mitochondrial matrix-facing; the sequence is FQGHHT. A helical transmembrane segment spans residues 73–105; sequence PTVQKGLRYGMILFIISEVLFFTGFFWAFYHSS. Residues 106 to 128 are Mitochondrial intermembrane-facing; the sequence is LAPTPELGGCWPPTGIHPLNPLE. The chain crosses the membrane as a helical span at residues 129-152; the sequence is VPLLNTSVLLASGVSITWAHHSLM. At 153 to 155 the chain is on the mitochondrial matrix side; it reads EGN. Residues 156–183 traverse the membrane as a helical segment; the sequence is RNHMLQALFITIALGVYFTLLQASEYYE. The Mitochondrial intermembrane portion of the chain corresponds to 184-190; the sequence is APFTISD. A helical transmembrane segment spans residues 191-223; that stretch reads GVYGSTFFVATGFHGLHVIIGSTFLIVCFFRQL. Residues 224–232 are Mitochondrial matrix-facing; sequence KFHFTSSHH. The helical transmembrane segment at 233 to 256 threads the bilayer; sequence FGFEAAAWYWHFVDVVWLFLYVSI. Residues 257-261 lie on the Mitochondrial intermembrane side of the membrane; sequence YWWGS.

It belongs to the cytochrome c oxidase subunit 3 family. In terms of assembly, component of the cytochrome c oxidase (complex IV, CIV), a multisubunit enzyme composed of 14 subunits. The complex is composed of a catalytic core of 3 subunits MT-CO1, MT-CO2 and MT-CO3, encoded in the mitochondrial DNA, and 11 supernumerary subunits COX4I, COX5A, COX5B, COX6A, COX6B, COX6C, COX7A, COX7B, COX7C, COX8 and NDUFA4, which are encoded in the nuclear genome. The complex exists as a monomer or a dimer and forms supercomplexes (SCs) in the inner mitochondrial membrane with NADH-ubiquinone oxidoreductase (complex I, CI) and ubiquinol-cytochrome c oxidoreductase (cytochrome b-c1 complex, complex III, CIII), resulting in different assemblies (supercomplex SCI(1)III(2)IV(1) and megacomplex MCI(2)III(2)IV(2)).

The protein resides in the mitochondrion inner membrane. The enzyme catalyses 4 Fe(II)-[cytochrome c] + O2 + 8 H(+)(in) = 4 Fe(III)-[cytochrome c] + 2 H2O + 4 H(+)(out). Its function is as follows. Component of the cytochrome c oxidase, the last enzyme in the mitochondrial electron transport chain which drives oxidative phosphorylation. The respiratory chain contains 3 multisubunit complexes succinate dehydrogenase (complex II, CII), ubiquinol-cytochrome c oxidoreductase (cytochrome b-c1 complex, complex III, CIII) and cytochrome c oxidase (complex IV, CIV), that cooperate to transfer electrons derived from NADH and succinate to molecular oxygen, creating an electrochemical gradient over the inner membrane that drives transmembrane transport and the ATP synthase. Cytochrome c oxidase is the component of the respiratory chain that catalyzes the reduction of oxygen to water. Electrons originating from reduced cytochrome c in the intermembrane space (IMS) are transferred via the dinuclear copper A center (CU(A)) of subunit 2 and heme A of subunit 1 to the active site in subunit 1, a binuclear center (BNC) formed by heme A3 and copper B (CU(B)). The BNC reduces molecular oxygen to 2 water molecules using 4 electrons from cytochrome c in the IMS and 4 protons from the mitochondrial matrix. The protein is Cytochrome c oxidase subunit 3 (MT-CO3) of Aepyceros melampus (Impala).